A 120-amino-acid chain; its full sequence is MTSTPITYKTLADSIFNDLINNIIKQHTLTSLTNIKDHSSLLNSSNSNTNSNTNGTIASNGGNGTTSDENNEIENSTIQDKSKLKQLETSRYFRCLNCGRNIAGGRFASHISKCLERKRK.

A compositionally biased stretch (low complexity) spans 40 to 60; that stretch reads SLLNSSNSNTNSNTNGTIASN. Residues 40–82 form a disordered region; that stretch reads SLLNSSNSNTNSNTNGTIASNGGNGTTSDENNEIENSTIQDKS. The SGF11-type zinc finger occupies 93–114; it reads FRCLNCGRNIAGGRFASHISKC.

It belongs to the SGF11 family. As to quaternary structure, component of the 1.8 MDa SAGA transcription coactivator-HAT complex. SAGA is built of 5 distinct domains with specialized functions. Within the SAGA complex, SUS1, SGF11, SGF73 and UBP8 form an additional subcomplex of SAGA called the DUB module (deubiquitination module). Interacts directly with SGF73, SUS1 and UBP8.

The protein resides in the nucleus. Its function is as follows. Functions as a component of the transcription regulatory histone acetylation (HAT) complex SAGA. At the promoters, SAGA is required for recruitment of the basal transcription machinery. It influences RNA polymerase II transcriptional activity through different activities such as TBP interaction and promoter selectivity, interaction with transcription activators, and chromatin modification through histone acetylation and deubiquitination. SAGA acetylates nucleosomal histone H3 to some extent (to form H3K9ac, H3K14ac, H3K18ac and H3K23ac). SAGA interacts with DNA via upstream activating sequences (UASs). Involved in transcriptional regulation of a subset of SAGA-regulated genes. Within the SAGA complex, participates in a subcomplex, that specifically deubiquitinates histones H2B. The polypeptide is SAGA-associated factor 11 (Candida albicans (strain SC5314 / ATCC MYA-2876) (Yeast)).